We begin with the raw amino-acid sequence, 1703 residues long: Protein TIC 214 (1703 aa).

Transmembrane regions (helical) follow at residues 39–61, 67–87, 90–110, 138–158, 174–194, and 220–240; these read YYGF…TFFL, GIIC…SIYC, LYVM…YMFY, LLLD…NPVL, FFLT…INSI, and FSIL…VPLI. 2 disordered regions span residues 615–643 and 1431–1494; these read GPRK…KERE and TKEP…WKSK. A coiled-coil region spans residues 618–660; that stretch reads KGKLEDKEKEKEKAAQTQTEVKKEREKEKEERVIKRFQNQSDF. Basic and acidic residues predominate over residues 619–643; the sequence is GKLEDKEKEKEKAAQTQTEVKKERE.

It belongs to the TIC214 family. Part of the Tic complex.

The protein localises to the plastid. It localises to the chloroplast inner membrane. Functionally, involved in protein precursor import into chloroplasts. May be part of an intermediate translocation complex acting as a protein-conducting channel at the inner envelope. In Psilotum nudum (Whisk fern), this protein is Protein TIC 214.